Reading from the N-terminus, the 221-residue chain is Agamous-like MADS-box protein AGL14 (221 aa).

The MADS-box domain occupies 3 to 57 (RGKTEMKRIENATSRQVTFSKRRNGLLKKAFELSVLCDAEVALIIFSPRGKLYEF). Positions 87–177 (SQQSKDETYG…MEKCEMQGRG (91 aa)) constitute a K-box domain.

As to quaternary structure, interacts with AGL16. In terms of tissue distribution, preferentially expressed in roots. Expressed in lateral root cap, root epidermis, root endodermis, columella of the root meristematic region, the vascular cylinder in differentiated zones of the primary root and in emerged lateral root primordia. Expressed in pollen.

The protein localises to the nucleus. Functionally, transcriptional activator that regulates root development by controlling meristem size and patterning of the root apical meristem. Regulates auxin transport and gradients in the root meristematic cells via direct regulation of the auxin efflux carrier PIN1 and PIN4 gene expression. Binds specifically to the CArG-box DNA sequences in the promoter regions of PIN1 and PIN4 genes. Involved in the regulation of shoot apical meristem (SAM) cell identities and transitions. Promotes flowering transition and participates in flower meristem maintenance and determinacy. Positively regulates TFL1 and WUS expression. Binds directly to the TFL1 regulatory sequences. The sequence is that of Agamous-like MADS-box protein AGL14 from Arabidopsis thaliana (Mouse-ear cress).